A 194-amino-acid polypeptide reads, in one-letter code: Oligoribonuclease (194 aa).

The 164-residue stretch at leucine 11–leucine 174 folds into the Exonuclease domain. Residue tyrosine 132 is part of the active site.

It belongs to the oligoribonuclease family.

It is found in the cytoplasm. Its function is as follows. 3'-to-5' exoribonuclease specific for small oligoribonucleotides. This chain is Oligoribonuclease, found in Xanthomonas oryzae pv. oryzae (strain MAFF 311018).